We begin with the raw amino-acid sequence, 380 residues long: Large ribosomal subunit protein mL38 (380 aa).

The transit peptide at Met1–Ser26 directs the protein to the mitochondrion. The stretch at Gln101–Ala122 forms a coiled coil.

The protein belongs to the phosphatidylethanolamine-binding protein family. Mitochondrion-specific ribosomal protein mL38 subfamily. Component of the mitochondrial ribosome large subunit (39S) which comprises a 16S rRNA and about 50 distinct proteins.

The protein resides in the mitochondrion. This is Large ribosomal subunit protein mL38 (MRPL38) from Bos taurus (Bovine).